The primary structure comprises 497 residues: Glucose-6-phosphate 1-dehydrogenase (497 aa).

Residues 15 to 22 (GASGDLSK), Arg49, and Lys153 each bind NADP(+). D-glucose 6-phosphate contacts are provided by residues Lys153, 183 to 187 (HYLGK), Glu221, and Asp240. Residue His245 is the Proton acceptor of the active site. Arg336 is an NADP(+) binding site. Lys339 contributes to the D-glucose 6-phosphate binding site. Positions 345, 349, and 371 each coordinate NADP(+). Gln373 is a D-glucose 6-phosphate binding site. NADP(+) contacts are provided by residues 379 to 381 (YLK), 399 to 401 (DLT), and Arg466.

It belongs to the glucose-6-phosphate dehydrogenase family.

The catalysed reaction is D-glucose 6-phosphate + NADP(+) = 6-phospho-D-glucono-1,5-lactone + NADPH + H(+). Its pathway is carbohydrate degradation; pentose phosphate pathway; D-ribulose 5-phosphate from D-glucose 6-phosphate (oxidative stage): step 1/3. Catalyzes the rate-limiting step of the oxidative pentose-phosphate pathway, which represents a route for the dissimilation of carbohydrates besides glycolysis. The main function of this enzyme is to provide reducing power (NADPH) and pentose phosphates for fatty acid and nucleic acid synthesis. The polypeptide is Glucose-6-phosphate 1-dehydrogenase (ZWF) (Kluyveromyces lactis (strain ATCC 8585 / CBS 2359 / DSM 70799 / NBRC 1267 / NRRL Y-1140 / WM37) (Yeast)).